A 204-amino-acid polypeptide reads, in one-letter code: Holliday junction branch migration complex subunit RuvA (204 aa).

Residues 1 to 63 (MIGKLSGKAD…EEHIHLYGFL (63 aa)) form a domain I region. The domain II stretch occupies residues 64 to 142 (TLEEKNFFNL…KISSSSAIKD (79 aa)). The segment at 143–153 (SLNIKNITPVT) is flexible linker. The tract at residues 153–204 (TSNEVMKALINLGFSRFEAQNVVQGIITQNPKISIDELIKTALKNRNSKFFS) is domain III.

This sequence belongs to the RuvA family. Homotetramer. Forms an RuvA(8)-RuvB(12)-Holliday junction (HJ) complex. HJ DNA is sandwiched between 2 RuvA tetramers; dsDNA enters through RuvA and exits via RuvB. An RuvB hexamer assembles on each DNA strand where it exits the tetramer. Each RuvB hexamer is contacted by two RuvA subunits (via domain III) on 2 adjacent RuvB subunits; this complex drives branch migration. In the full resolvosome a probable DNA-RuvA(4)-RuvB(12)-RuvC(2) complex forms which resolves the HJ.

The protein localises to the cytoplasm. The RuvA-RuvB-RuvC complex processes Holliday junction (HJ) DNA during genetic recombination and DNA repair, while the RuvA-RuvB complex plays an important role in the rescue of blocked DNA replication forks via replication fork reversal (RFR). RuvA specifically binds to HJ cruciform DNA, conferring on it an open structure. The RuvB hexamer acts as an ATP-dependent pump, pulling dsDNA into and through the RuvAB complex. HJ branch migration allows RuvC to scan DNA until it finds its consensus sequence, where it cleaves and resolves the cruciform DNA. In Rickettsia canadensis (strain McKiel), this protein is Holliday junction branch migration complex subunit RuvA.